A 626-amino-acid polypeptide reads, in one-letter code: MGKIIGIDLGTTNSCVSVMEGQEAVVIPNAEGKRTTPSIIAFVEGGEIKVGDPAKRQAVTNPTKTVASIKRFMGHSFSETTDEAKRVPYSVVKGDNNTPRVDIDGRLYTAQELSAMTLQKMKKTAEDYLGQTVTEAVITVPAYFNDAQRQATKEAGEIAGLKVMRIINEPTAAALAYGLDKKGIDQKIAVYDLGGGTFDISILELGDGVFEVLSTNGDTHLGGDDFDQTIIDWLADEFKAEEGIDLRLDPMSLQRIKEAAEKAKIELSSSAETEINLPYVTATASGPKHLVKKLTRAKFEQLSDTLVKRSMEPVAKALKDAGLTVKDIDEVILVGGSTRMPRIADEVEKFFGKKASKGVNPDEVVAIGAAIQGGVLSGDVKDVLLLDVTPLSLGIETMGGVMTILIESNTTIPTKKSQIFSTAADSQPTVELHVLQGARAMAVDNKTIGRFNLDGIPPAPRGVPQIEVAFDIDANGIIKVSATDKGTGKSHDIRIEASSGLTSEEIERMKKDAEANAGADKIARERVEKINEADSLIFQTETQLKELGDKITDEHKTAIEYALTELRMAHQSQDLEAIQKGLDNVNAAWKTATEAMYAQGEQGQAAQPQAETQGDDVQDVEFEEVK.

Position 197 is a phosphothreonine; by autocatalysis (Thr197). The span at 598 to 612 (AQGEQGQAAQPQAET) shows a compositional bias: low complexity. The segment at 598-626 (AQGEQGQAAQPQAETQGDDVQDVEFEEVK) is disordered. The span at 613–626 (QGDDVQDVEFEEVK) shows a compositional bias: acidic residues.

It belongs to the heat shock protein 70 family.

Its function is as follows. Acts as a chaperone. The chain is Chaperone protein DnaK from Flavobacterium psychrophilum (strain ATCC 49511 / DSM 21280 / CIP 103535 / JIP02/86).